The primary structure comprises 250 residues: Hemocyanin, units C and D (250 aa).

Histidine 1 provides a ligand contact to Cu cation. A unit C region spans residues 1-106 (HGSTKWCPSP…RAWIEPVTSA (106 aa)). Cysteines 7 and 18 form a disulfide. Positions 19–21 (CHH) form a cross-link, 2'-(S-cysteinyl)-histidine (Cys-His). Histidine 21 and histidine 143 together coordinate Cu cation. A unit D region spans residues 107-250 (VRIRKNLNDL…DAQDVIYNNH (144 aa)). Residues cysteine 149 and cysteine 160 are joined by a disulfide bond. A cross-link (2'-(S-cysteinyl)-histidine (Cys-His)) is located at residues 161-163 (CLH). A Cu cation-binding site is contributed by histidine 172.

The protein belongs to the tyrosinase family. Hemocyanin subfamily. In terms of assembly, decamers of large identical subunits (390 kDa), each containing 8 globular oxygen-binding functional units. It depends on Cu(2+) as a cofactor.

Functionally, hemocyanins are copper-containing oxygen carriers occurring freely dissolved in the hemolymph of many mollusks and arthropods. The protein is Hemocyanin, units C and D of Sepia officinalis (Common cuttlefish).